Here is a 363-residue protein sequence, read N- to C-terminus: 3-dehydroquinate synthase (363 aa).

Residues 134–135 (TT), Lys147, and Lys156 each bind NAD(+). Positions 189, 254, and 271 each coordinate Zn(2+).

This sequence belongs to the sugar phosphate cyclases superfamily. Dehydroquinate synthase family. It depends on Co(2+) as a cofactor. The cofactor is Zn(2+). NAD(+) is required as a cofactor.

It localises to the cytoplasm. It catalyses the reaction 7-phospho-2-dehydro-3-deoxy-D-arabino-heptonate = 3-dehydroquinate + phosphate. Its pathway is metabolic intermediate biosynthesis; chorismate biosynthesis; chorismate from D-erythrose 4-phosphate and phosphoenolpyruvate: step 2/7. Functionally, catalyzes the conversion of 3-deoxy-D-arabino-heptulosonate 7-phosphate (DAHP) to dehydroquinate (DHQ). The chain is 3-dehydroquinate synthase from Prochlorococcus marinus (strain MIT 9312).